The sequence spans 156 residues: Small ribosomal subunit protein eS19A (156 aa).

It belongs to the eukaryotic ribosomal protein eS19 family.

This chain is Small ribosomal subunit protein eS19A (RpS19a), found in Drosophila melanogaster (Fruit fly).